Consider the following 61-residue polypeptide: Small ribosomal subunit protein uS14B (61 aa).

4 residues coordinate Zn(2+): cysteine 24, cysteine 27, cysteine 40, and cysteine 43.

It belongs to the universal ribosomal protein uS14 family. Zinc-binding uS14 subfamily. In terms of assembly, part of the 30S ribosomal subunit. Contacts proteins S3 and S10. Requires Zn(2+) as cofactor.

Its function is as follows. Binds 16S rRNA, required for the assembly of 30S particles and may also be responsible for determining the conformation of the 16S rRNA at the A site. In Oceanobacillus iheyensis (strain DSM 14371 / CIP 107618 / JCM 11309 / KCTC 3954 / HTE831), this protein is Small ribosomal subunit protein uS14B.